Here is a 716-residue protein sequence, read N- to C-terminus: 1,4-alpha-glucan branching enzyme GlgB (716 aa).

D399 acts as the Nucleophile in catalysis. Residue E452 is the Proton donor of the active site.

The protein belongs to the glycosyl hydrolase 13 family. GlgB subfamily. In terms of assembly, monomer.

It carries out the reaction Transfers a segment of a (1-&gt;4)-alpha-D-glucan chain to a primary hydroxy group in a similar glucan chain.. It participates in glycan biosynthesis; glycogen biosynthesis. In terms of biological role, catalyzes the formation of the alpha-1,6-glucosidic linkages in glycogen by scission of a 1,4-alpha-linked oligosaccharide from growing alpha-1,4-glucan chains and the subsequent attachment of the oligosaccharide to the alpha-1,6 position. The chain is 1,4-alpha-glucan branching enzyme GlgB from Rhodopseudomonas palustris (strain ATCC BAA-98 / CGA009).